The primary structure comprises 220 residues: Large ribosomal subunit protein uL3 (220 aa).

Positions 126-158 are disordered; it reads GFQGAIKRHGQSRGPMSHGSRYHRRPGSMGMAS.

Belongs to the universal ribosomal protein uL3 family. As to quaternary structure, part of the 50S ribosomal subunit. Forms a cluster with proteins L14 and L19.

Functionally, one of the primary rRNA binding proteins, it binds directly near the 3'-end of the 23S rRNA, where it nucleates assembly of the 50S subunit. This Macrococcus caseolyticus (strain JCSC5402) (Macrococcoides caseolyticum) protein is Large ribosomal subunit protein uL3.